A 789-amino-acid polypeptide reads, in one-letter code: Spermatogenesis-associated protein 20 (789 aa).

The segment covering 1–19 (MSHHSPPPPKHKGEHKGHG) has biased composition (basic residues). A disordered region spans residues 1-65 (MSHHSPPPPK…CPPPAPQKTA (65 aa)). A phosphoserine mark is found at S5 and S652.

In terms of tissue distribution, testis-specific and age-dependent (at protein level). Highly expressed. Expressed in round spermatids located in the inner half-layer of the seminiferous epithelium as well as in early elongated spermatids having cytoplasmic protrusions into the tubular lumen.

The protein resides in the secreted. Its function is as follows. May play a role in fertility regulation. The polypeptide is Spermatogenesis-associated protein 20 (Spata20) (Rattus norvegicus (Rat)).